We begin with the raw amino-acid sequence, 435 residues long: Nucleoredoxin (435 aa).

Serine 2 is subject to N-acetylserine. The Thioredoxin domain occupies proline 167–glutamate 314.

The protein belongs to the nucleoredoxin family. Associates with the phosphatase 2A holoenzyme. Interacts with PPP2CA; the interaction is direct. Interacts with DVL1 (via PDZ domain); the interaction is direct and regulated by oxidative stress. Widely expressed with higher expression in testis and skin.

It is found in the cytoplasm. The protein resides in the cytosol. The protein localises to the nucleus. It carries out the reaction [protein]-dithiol + NAD(+) = [protein]-disulfide + NADH + H(+). The catalysed reaction is [protein]-dithiol + NADP(+) = [protein]-disulfide + NADPH + H(+). Functionally, functions as a redox-dependent negative regulator of the Wnt signaling pathway, possibly by preventing ubiquitination of DVL3 by the BCR(KLHL12) complex. May also function as a transcriptional regulator act as a regulator of protein phosphatase 2A (PP2A). The polypeptide is Nucleoredoxin (Nxn) (Mus musculus (Mouse)).